Consider the following 271-residue polypeptide: Tryptophan synthase alpha chain (271 aa).

Active-site proton acceptor residues include Glu-49 and Asp-60.

Belongs to the TrpA family. Tetramer of two alpha and two beta chains.

It carries out the reaction (1S,2R)-1-C-(indol-3-yl)glycerol 3-phosphate + L-serine = D-glyceraldehyde 3-phosphate + L-tryptophan + H2O. It participates in amino-acid biosynthesis; L-tryptophan biosynthesis; L-tryptophan from chorismate: step 5/5. Functionally, the alpha subunit is responsible for the aldol cleavage of indoleglycerol phosphate to indole and glyceraldehyde 3-phosphate. In Burkholderia ambifaria (strain MC40-6), this protein is Tryptophan synthase alpha chain.